A 341-amino-acid chain; its full sequence is L-threonine 3-dehydrogenase (341 aa).

Cys-38 is a binding site for Zn(2+). Catalysis depends on charge relay system residues Thr-40 and His-43. Zn(2+) contacts are provided by His-63, Glu-64, Cys-93, Cys-96, Cys-99, and Cys-107. NAD(+) contacts are provided by residues Ile-175, Asp-195, Arg-200, Leu-262–Ile-264, and Ile-286–Tyr-287.

Belongs to the zinc-containing alcohol dehydrogenase family. Homotetramer. The cofactor is Zn(2+).

The protein localises to the cytoplasm. It catalyses the reaction L-threonine + NAD(+) = (2S)-2-amino-3-oxobutanoate + NADH + H(+). It functions in the pathway amino-acid degradation; L-threonine degradation via oxydo-reductase pathway; glycine from L-threonine: step 1/2. In terms of biological role, catalyzes the NAD(+)-dependent oxidation of L-threonine to 2-amino-3-ketobutyrate. The protein is L-threonine 3-dehydrogenase of Enterobacter sp. (strain 638).